The sequence spans 528 residues: Protein spinster homolog 1 (528 aa).

The segment at 1 to 49 is disordered; sequence MAGSDTAPFLSQADDPDDGPVPGTPGLPGSTGNPKSEEPEVPDQEGLQR. Ala-2 is subject to N-acetylalanine. Helical transmembrane passes span 50-70, 98-118, 127-147, 160-180, 187-207, 218-238, 278-298, 323-343, 357-377, 381-401, 421-441, and 465-485; these read ITGL…YINL, GLIQ…FGYL, LMCG…FIPG, VGVG…DLFV, MLSI…IAGS, WALR…FLVV, LGFT…PAFL, LIFG…GVEI, LVCA…LACA, IVAT…NWAI, FQIV…IGLI, and MLCA…AIFI. Phosphoserine is present on Ser-518.

Belongs to the major facilitator superfamily. Spinster (TC 2.A.1.49) family. Interacts with BCL2 and BCL2L1.

It is found in the lysosome membrane. The protein resides in the mitochondrion inner membrane. The catalysed reaction is a 1-acyl-sn-glycero-3-phosphocholine(out) + H(+)(out) = a 1-acyl-sn-glycero-3-phosphocholine(in) + H(+)(in). It carries out the reaction 1-hexadecanoyl-sn-glycero-3-phosphocholine(out) + H(+)(out) = 1-hexadecanoyl-sn-glycero-3-phosphocholine(in) + H(+)(in). The enzyme catalyses 1-(9Z-octadecenoyl)-sn-glycero-3-phosphocholine(out) + H(+)(out) = 1-(9Z-octadecenoyl)-sn-glycero-3-phosphocholine(in) + H(+)(in). It catalyses the reaction 1-(5Z,8Z,11Z,14Z-eicosatetraenoyl)-sn-glycero-3-phosphocholine(out) + H(+)(out) = 1-(5Z,8Z,11Z,14Z-eicosatetraenoyl)-sn-glycero-3-phosphocholine(in) + H(+)(in). The catalysed reaction is 1-(4Z,7Z,10Z,13Z,16Z,19Z-docosahexaenoyl)-sn-glycero-3-phosphocholine(out) + H(+)(out) = 1-(4Z,7Z,10Z,13Z,16Z,19Z-docosahexaenoyl)-sn-glycero-3-phosphocholine(in) + H(+)(in). It carries out the reaction a 1-acyl-sn-glycero-3-phosphoethanolamine(out) + H(+)(out) = a 1-acyl-sn-glycero-3-phosphoethanolamine(in) + H(+)(in). The enzyme catalyses 1-(9Z-octadecenoyl)-sn-glycero-3-phosphoethanolamine(out) + H(+)(out) = 1-(9Z-octadecenoyl)-sn-glycero-3-phosphoethanolamine(in) + H(+)(in). It catalyses the reaction 1-acyl-sn-glycero-3-phospho-(1'-sn-glycerol)(out) + H(+)(out) = 1-acyl-sn-glycero-3-phospho-(1'-sn-glycerol)(in) + H(+)(in). The catalysed reaction is 1-(9Z-octadecenoyl)-sn-glycero-3-phospho-(1'-sn-glycerol)(out) + H(+)(out) = 1-(9Z-octadecenoyl)-sn-glycero-3-phospho-(1'-sn-glycerol)(in) + H(+)(in). It carries out the reaction a 1-O-(1Z-alkenyl)-sn-glycero-3-phosphocholine(out) + H(+)(out) = a 1-O-(1Z-alkenyl)-sn-glycero-3-phosphocholine(in) + H(+)(in). The enzyme catalyses 1-(1Z-hexadecenyl)-sn-glycero-3-phosphocholine(out) + H(+)(out) = 1-(1Z-hexadecenyl)-sn-glycero-3-phosphocholine(in) + H(+)(in). It catalyses the reaction a 1-O-(1Z-alkenyl)-sn-glycero-3-phosphoethanolamine(out) + H(+)(out) = a 1-O-(1Z-alkenyl)-sn-glycero-3-phosphoethanolamine(in) + H(+)(in). The catalysed reaction is 1-O-(1Z-hexadecenyl)-sn-glycero-3-phosphoethanolamine(out) + H(+)(out) = 1-O-(1Z-hexadecenyl)-sn-glycero-3-phosphoethanolamine(in) + H(+)(in). Its function is as follows. Plays a critical role in the phospholipid salvage pathway from lysosomes to the cytosol. Mediates the rate-limiting, proton-dependent, lysosomal efflux of lysophospholipids, which can then be reacylated by acyltransferases in the endoplasmic reticulum to form phospholipids. Selective for zwitterionic headgroups such as lysophosphatidylcholine (LPC) and lysophosphatidylethanolamine (LPE), can also transport lysophosphatidylglycerol (LPG), but not other anionic lysophospholipids, sphingosine, nor sphingomyelin. Transports lysophospholipids with saturated, monounsaturated, and polyunsaturated fatty acids, such as 1-hexadecanoyl-sn-glycero-3-phosphocholine, 1-(9Z-octadecenoyl)-sn-glycero-3-phosphocholine and 1-(4Z,7Z,10Z,13Z,16Z,19Z-docosahexaenoyl)-sn-glycero-3-phosphocholine, respectively. Can also transport lysoplasmalogen (LPC with a fatty alcohol) such as 1-(1Z-hexadecenyl)-sn-glycero-3-phosphocholine. Lysosomal LPC could function as intracellular signaling messenger. Essential player in lysosomal homeostasis. Crucial for cell survival under conditions of nutrient limitation. May be involved in necrotic or autophagic cell death. This is Protein spinster homolog 1 (SPNS1) from Homo sapiens (Human).